The primary structure comprises 184 residues: ATP synthase subunit b, chloroplastic (184 aa).

Residues 27 to 49 (LATNLINLSVVLGVLIFFGKGVL) form a helical membrane-spanning segment.

This sequence belongs to the ATPase B chain family. As to quaternary structure, F-type ATPases have 2 components, F(1) - the catalytic core - and F(0) - the membrane proton channel. F(1) has five subunits: alpha(3), beta(3), gamma(1), delta(1), epsilon(1). F(0) has four main subunits: a(1), b(1), b'(1) and c(10-14). The alpha and beta chains form an alternating ring which encloses part of the gamma chain. F(1) is attached to F(0) by a central stalk formed by the gamma and epsilon chains, while a peripheral stalk is formed by the delta, b and b' chains.

The protein localises to the plastid. It is found in the chloroplast thylakoid membrane. Its function is as follows. F(1)F(0) ATP synthase produces ATP from ADP in the presence of a proton or sodium gradient. F-type ATPases consist of two structural domains, F(1) containing the extramembraneous catalytic core and F(0) containing the membrane proton channel, linked together by a central stalk and a peripheral stalk. During catalysis, ATP synthesis in the catalytic domain of F(1) is coupled via a rotary mechanism of the central stalk subunits to proton translocation. Component of the F(0) channel, it forms part of the peripheral stalk, linking F(1) to F(0). This Manihot esculenta (Cassava) protein is ATP synthase subunit b, chloroplastic.